Reading from the N-terminus, the 792-residue chain is Endonuclease MutS2 (792 aa).

Position 335–342 (335–342) interacts with ATP; the sequence is GPNTGGKT. The Smr domain occupies 717 to 792; sequence VDLRGLNLEE…GAGVTIVKLK (76 aa).

This sequence belongs to the DNA mismatch repair MutS family. MutS2 subfamily. Homodimer. Binds to stalled ribosomes, contacting rRNA.

Endonuclease that is involved in the suppression of homologous recombination and thus may have a key role in the control of bacterial genetic diversity. Its function is as follows. Acts as a ribosome collision sensor, splitting the ribosome into its 2 subunits. Detects stalled/collided 70S ribosomes which it binds and splits by an ATP-hydrolysis driven conformational change. Acts upstream of the ribosome quality control system (RQC), a ribosome-associated complex that mediates the extraction of incompletely synthesized nascent chains from stalled ribosomes and their subsequent degradation. Probably generates substrates for RQC. In Clostridioides difficile (strain 630) (Peptoclostridium difficile), this protein is Endonuclease MutS2.